Consider the following 104-residue polypeptide: L-rhamnose mutarotase (104 aa).

A substrate-binding site is contributed by tyrosine 18. The active-site Proton donor is histidine 22. Substrate contacts are provided by residues tyrosine 41 and 76-77; that span reads WW.

Belongs to the rhamnose mutarotase family. Homodimer.

The protein localises to the cytoplasm. It carries out the reaction alpha-L-rhamnose = beta-L-rhamnose. It functions in the pathway carbohydrate metabolism; L-rhamnose metabolism. Its function is as follows. Involved in the anomeric conversion of L-rhamnose. The protein is L-rhamnose mutarotase of Escherichia coli O17:K52:H18 (strain UMN026 / ExPEC).